Consider the following 279-residue polypeptide: Pantothenate synthetase (279 aa).

ATP is bound at residue 26-33 (MGNLHEGH). Catalysis depends on H33, which acts as the Proton donor. Q57 contributes to the (R)-pantoate binding site. Q57 serves as a coordination point for beta-alanine. Residue 144–147 (GKKD) coordinates ATP. Position 150 (Q150) interacts with (R)-pantoate. Residues V173 and 181–184 (LSSR) contribute to the ATP site.

The protein belongs to the pantothenate synthetase family. Homodimer.

The protein resides in the cytoplasm. It catalyses the reaction (R)-pantoate + beta-alanine + ATP = (R)-pantothenate + AMP + diphosphate + H(+). It participates in cofactor biosynthesis; (R)-pantothenate biosynthesis; (R)-pantothenate from (R)-pantoate and beta-alanine: step 1/1. In terms of biological role, catalyzes the condensation of pantoate with beta-alanine in an ATP-dependent reaction via a pantoyl-adenylate intermediate. The sequence is that of Pantothenate synthetase from Burkholderia ambifaria (strain ATCC BAA-244 / DSM 16087 / CCUG 44356 / LMG 19182 / AMMD) (Burkholderia cepacia (strain AMMD)).